Reading from the N-terminus, the 366-residue chain is MQPLWLCWALWVLPLASPGAALTGEQLLGSLLRQLQLKEVPTLDRADMEELVIPTHVRAQYVALLQRSHGDRSRGKRFSQSFREVAGRFLALEASTHLLVFGMEQRLPPNSELVQAVLRLFQEPVPKAALHRHGRLSPRSARARVTVEWLRVRDDGSNRTSLIDSRLVSVHESGWKAFDVTEAVNFWQQLSRPRQPLLLQVSVQREHLGPLASGAHKLVRFASQGAPAGLGEPQLELHTLDLGDYGAQGDCDPEAPMTEGTRCCRQEMYIDLQGMKWAENWVLEPPGFLAYECVGTCRQPPEALAFKWPFLGPRQCIASETDSLPMIVSIKEGGRTRPQVVSLPNMRVQKCSCASDGALVPRRLQP.

Residues 1–21 (MQPLWLCWALWVLPLASPGAA) form the signal peptide. Residues 22-76 (LTGEQLLGSLLRQLQLKEVPTLDRADMEELVIPTHVRAQYVALLQRSHGDRSRGK) constitute a propeptide, or 135. A glycan (N-linked (GlcNAc...) asparagine) is linked at asparagine 158. 4 disulfides stabilise this stretch: cysteine 251–cysteine 264, cysteine 263–cysteine 316, cysteine 293–cysteine 351, and cysteine 297–cysteine 353.

This sequence belongs to the TGF-beta family. The processing of the protein may also occur at the second R-X-X-R site located at AA 132-135. Processing appears to be regulated in a cell-type specific manner.

Its subcellular location is the secreted. Functionally, required for left-right axis determination as a regulator of LEFTY2 and NODAL. In Homo sapiens (Human), this protein is Left-right determination factor 1 (LEFTY1).